The chain runs to 420 residues: UDP-N-acetylmuramoylalanine--D-glutamate ligase (420 aa).

109-115 (GSVGKST) provides a ligand contact to ATP.

The protein belongs to the MurCDEF family.

The protein localises to the cytoplasm. The catalysed reaction is UDP-N-acetyl-alpha-D-muramoyl-L-alanine + D-glutamate + ATP = UDP-N-acetyl-alpha-D-muramoyl-L-alanyl-D-glutamate + ADP + phosphate + H(+). The protein operates within cell wall biogenesis; peptidoglycan biosynthesis. Its function is as follows. Cell wall formation. Catalyzes the addition of glutamate to the nucleotide precursor UDP-N-acetylmuramoyl-L-alanine (UMA). The protein is UDP-N-acetylmuramoylalanine--D-glutamate ligase of Fervidobacterium nodosum (strain ATCC 35602 / DSM 5306 / Rt17-B1).